We begin with the raw amino-acid sequence, 252 residues long: tRNA-cytidine(32) 2-sulfurtransferase (252 aa).

Residues 37–42 (SGGKDS) carry the PP-loop motif motif. Residues Cys112, Cys115, and Cys202 each coordinate [4Fe-4S] cluster.

It belongs to the TtcA family. Homodimer. Mg(2+) serves as cofactor. It depends on [4Fe-4S] cluster as a cofactor.

It is found in the cytoplasm. It catalyses the reaction cytidine(32) in tRNA + S-sulfanyl-L-cysteinyl-[cysteine desulfurase] + AH2 + ATP = 2-thiocytidine(32) in tRNA + L-cysteinyl-[cysteine desulfurase] + A + AMP + diphosphate + H(+). The protein operates within tRNA modification. Its function is as follows. Catalyzes the ATP-dependent 2-thiolation of cytidine in position 32 of tRNA, to form 2-thiocytidine (s(2)C32). The sulfur atoms are provided by the cysteine/cysteine desulfurase (IscS) system. The chain is tRNA-cytidine(32) 2-sulfurtransferase from Geotalea uraniireducens (strain Rf4) (Geobacter uraniireducens).